We begin with the raw amino-acid sequence, 1004 residues long: Zinc finger protein 316 (1004 aa).

The interval 1–148 (MAALHTTPDS…EEEEDEDEDD (148 aa)) is disordered. Ala2 bears the N-acetylalanine mark. Thr7 is subject to Phosphothreonine. Phosphoserine is present on Ser10. A compositionally biased stretch (acidic residues) spans 21-60 (GSECDPDQEEEEEEEEKGEEVQEVEEEEEEIVVEEEEEGV). Residues 61–72 (AEVVQDAQVEAV) show a composition bias toward low complexity. Acidic residues predominate over residues 73–95 (AEVEVEADVEEEDVKEVLAEEEC). Ser112 bears the Phosphoserine mark. Positions 132–148 (EDLEEEEEEEEDEDEDD) are enriched in acidic residues. Positions 158–229 (VTFEDVAVYF…DSPRPEEGDI (72 aa)) constitute a KRAB domain. 5 C2H2-type zinc fingers span residues 345-367 (TTCD…QRYH), 373-395 (FGCE…QRTH), 401-423 (FPCP…RRIH), 429-451 (YRCA…QRTH), and 457-479 (YPCS…QAVH). The C2H2-type 6; degenerate zinc finger occupies 485–512 (HCCPDCGQAFRLRADFQRHRRGGGCAEA). The segment at 508-574 (GCAEAGGDGP…TPSGKVDPAP (67 aa)) is disordered. The segment covering 531 to 557 (EDTDPGPEGSEVGEADGEAEAAAEERE) has biased composition (acidic residues). 5 consecutive C2H2-type zinc fingers follow at residues 691-713 (WICS…QRYH), 719-741 (HRCA…RRTH), 747-769 (FPCP…VRGH), 775-797 (FVCG…GRAH), and 803-825 (YACG…QWAH). A Glycyl lysine isopeptide (Lys-Gly) (interchain with G-Cter in SUMO2) cross-link involves residue Lys829. 4 C2H2-type zinc fingers span residues 831–853 (HRCP…RRTH), 859–881 (FRCA…RRGH), 887–909 (FPCP…QRTH), and 915–937 (YACA…MKTH). Residues 936 to 976 (THRGATAAPGSGSAPAPAPKPEAAAKGPSSAGPGERGSALL) are disordered. Low complexity predominate over residues 939 to 968 (GATAAPGSGSAPAPAPKPEAAAKGPSSAGP). A Glycyl lysine isopeptide (Lys-Gly) (interchain with G-Cter in SUMO2) cross-link involves residue Lys955.

This sequence belongs to the krueppel C2H2-type zinc-finger protein family.

The protein localises to the nucleus. May be involved in transcriptional regulation. This Homo sapiens (Human) protein is Zinc finger protein 316 (ZNF316).